We begin with the raw amino-acid sequence, 522 residues long: MNLGVVIKIKRKKAIIVTETGEFKAVNARNGMFLGQKILFDQQDVIENNRNGIGLAYSAAIAGMVAVFVFMFTYFGLHNFNGTFAYVDVDINPSVEFAVNRDGIVVNAEPLNDDGRKVLEELIYKDALLEDVILDLVDKSRKYGFIEDNDRKNIILISAALNSDEQEQRNDFEKKLVDNLMPELENLDVNIEMRFVIASKEQRKKAQENKVSMGKYMIYEMARRQGEKLTLESIMSETLENLLLGQDFGVIETEKTPVNTPVKSTATPTKALAAEITPTKTPEQVVMTPANTPAKPTAAPTKAPAAVAVTSAKTPERATTVPVNTPVKPTDAPTKSPATATATATRAPVKATATPAKTLKPSDTPVKTPDGEQSVKVRFYNNNTLSETGVIYMRINVINTGNAPLDLSDLKLRYYYTIDSESEQRFNCDWSSIGAHNVTGSFGKVNPSRNGADTYVEIGFTKEAGMLQPGESVELNARFSKTDNTQYNKADDYSFNSHYYEYVDWDRITAYISGILKWGREP.

Topologically, residues 1-51 (MNLGVVIKIKRKKAIIVTETGEFKAVNARNGMFLGQKILFDQQDVIENNRN) are cytoplasmic. The region spanning 2–49 (NLGVVIKIKRKKAIIVTETGEFKAVNARNGMFLGQKILFDQQDVIENN) is the RsgI N-terminal anti-sigma domain. Residues 52-72 (GIGLAYSAAIAGMVAVFVFMF) traverse the membrane as a helical segment. Over 73–522 (TYFGLHNFNG…SGILKWGREP (450 aa)) the chain is Extracellular. The span at 311-361 (SAKTPERATTVPVNTPVKPTDAPTKSPATATATATRAPVKATATPAKTLKP) shows a compositional bias: low complexity. Residues 311–371 (SAKTPERATT…SDTPVKTPDG (61 aa)) are disordered. Residues 371–522 (GEQSVKVRFY…SGILKWGREP (152 aa)) form the CBM3 domain.

In terms of assembly, interacts (via RsgI N-terminal anti-sigma domain) with SigI4.

It localises to the cell membrane. In terms of biological role, anti-sigma factor for SigI4. Negatively regulates SigI4 activity through direct interaction. Binding of the polysaccharide substrate to the extracellular C-terminal sensing domain of RsgI4 may induce a conformational change in its N-terminal cytoplasmic region, leading to the release and activation of SigI4. This chain is Anti-sigma-I factor RsgI4, found in Acetivibrio thermocellus (strain ATCC 27405 / DSM 1237 / JCM 9322 / NBRC 103400 / NCIMB 10682 / NRRL B-4536 / VPI 7372) (Clostridium thermocellum).